We begin with the raw amino-acid sequence, 363 residues long: Hydroxycarboxylic acid receptor 2 (363 aa).

At 1-33 (MNRHHLQDHFLEIDKKNCCVFRDDFIVKVLPPV) the chain is on the extracellular side. A helical transmembrane segment spans residues 34 to 54 (LGLEFIFGLLGNGLALWIFCF). The Cytoplasmic segment spans residues 55–63 (HLKSWKSSR). Residues 64–84 (IFLFNLAVADFLLIICLPFLM) traverse the membrane as a helical segment. Over 85 to 102 (DNYVRRWDWKFGDIPCRL) the chain is Extracellular. The cysteines at positions 100 and 177 are disulfide-linked. The chain crosses the membrane as a helical span at residues 103-123 (MLFMLAMNRQGSIIFLTVVAV). Topologically, residues 124-142 (DRYFRVVHPHHALNKISNR) are cytoplasmic. Residues 143–163 (TAAIISCLLWGITIGLTVHLL) traverse the membrane as a helical segment. Topologically, residues 164-192 (KKKMPIQNGGANLCSSFSICHTFQWHEAM) are extracellular. A helical membrane pass occupies residues 193–213 (FLLEFFLPLGIILFCSARIIW). Over 214–229 (SLRQRQMDRHAKIKRA) the chain is Cytoplasmic. The helical transmembrane segment at 230–250 (ITFIMVVAIVFVICFLPSVVV) threads the bilayer. The Extracellular portion of the chain corresponds to 251–273 (RIRIFWLLHTSGTQNCEVYRSVD). Residues 274–294 (LAFFITLSFTYMNSMLDPVVY) form a helical membrane-spanning segment. Residues 295 to 363 (YFSSPSFPNF…SPSYLGPTSP (69 aa)) lie on the Cytoplasmic side of the membrane. A disordered region spans residues 319-363 (GEPDNNRSTSVELTGDPNKTRGAPEALMANSGEPWSPSYLGPTSP). Serine 328 is subject to Phosphoserine.

This sequence belongs to the G-protein coupled receptor 1 family. As to expression, expression largely restricted to adipose tissue and spleen. Expressed on mature neutrophils but not on immature neutrophils or eosinophils.

It is found in the cell membrane. Acts as a high affinity receptor for both nicotinic acid (also known as niacin) and (D)-beta-hydroxybutyrate and mediates increased adiponectin secretion and decreased lipolysis through G(i)-protein-mediated inhibition of adenylyl cyclase. This pharmacological effect requires nicotinic acid doses that are much higher than those provided by a normal diet. Mediates nicotinic acid-induced apoptosis in mature neutrophils. Receptor activation by nicotinic acid results in reduced cAMP levels which may affect activity of cAMP-dependent protein kinase A and phosphorylation of target proteins, leading to neutrophil apoptosis. The rank order of potency for the displacement of nicotinic acid binding is 5-methyl pyrazole-3-carboxylic acid = pyridine-3-acetic acid &gt; acifran &gt; 5-methyl nicotinic acid = acipimox &gt;&gt; nicotinuric acid = nicotinamide. This Homo sapiens (Human) protein is Hydroxycarboxylic acid receptor 2 (HCAR2).